The chain runs to 226 residues: Probable functional amyloid protease FapD (226 aa).

Residues 1–18 (MRRATLCLLLLLAGPSWA) form the signal peptide. A Peptidase C39 domain is found at 50 to 180 (QKTDFSCGAA…AGWNGIVFAV (131 aa)). The active site involves Cys56.

Belongs to the FapD family.

The protein resides in the periplasm. Functionally, probable cysteine protease that is involved in processing fibril precursors. Upon overexpression of the endogenous six-gene locus (fapA-fapF) in situ, cells form large clumps during liquid growth, make large amounts of biofilm and produce amyloid fibrils. Expression of the 6 gene operon in E.coli strain BL21(DE3) induces flocculation and biofilm formation with copious extracellular fibrils. The protein is Probable functional amyloid protease FapD of Pseudomonas fluorescens.